The chain runs to 330 residues: Ketol-acid reductoisomerase (NADP(+)) (330 aa).

The region spanning 2-182 (ARMYYDADAN…GGTRAGILET (181 aa)) is the KARI N-terminal Rossmann domain. NADP(+) contacts are provided by residues 25-28 (YGSQ), serine 51, serine 53, and 83-86 (DEFQ). The active site involves histidine 108. NADP(+) is bound at residue glycine 134. In terms of domain architecture, KARI C-terminal knotted spans 183-328 (SFREETETDL…KDLRAMFSWL (146 aa)). Mg(2+) contacts are provided by aspartate 191, glutamate 195, glutamate 227, and glutamate 231. Serine 252 is a substrate binding site.

Belongs to the ketol-acid reductoisomerase family. Mg(2+) serves as cofactor.

It catalyses the reaction (2R)-2,3-dihydroxy-3-methylbutanoate + NADP(+) = (2S)-2-acetolactate + NADPH + H(+). The catalysed reaction is (2R,3R)-2,3-dihydroxy-3-methylpentanoate + NADP(+) = (S)-2-ethyl-2-hydroxy-3-oxobutanoate + NADPH + H(+). It participates in amino-acid biosynthesis; L-isoleucine biosynthesis; L-isoleucine from 2-oxobutanoate: step 2/4. The protein operates within amino-acid biosynthesis; L-valine biosynthesis; L-valine from pyruvate: step 2/4. Its function is as follows. Involved in the biosynthesis of branched-chain amino acids (BCAA). Catalyzes an alkyl-migration followed by a ketol-acid reduction of (S)-2-acetolactate (S2AL) to yield (R)-2,3-dihydroxy-isovalerate. In the isomerase reaction, S2AL is rearranged via a Mg-dependent methyl migration to produce 3-hydroxy-3-methyl-2-ketobutyrate (HMKB). In the reductase reaction, this 2-ketoacid undergoes a metal-dependent reduction by NADPH to yield (R)-2,3-dihydroxy-isovalerate. The polypeptide is Ketol-acid reductoisomerase (NADP(+)) (Synechococcus sp. (strain ATCC 27144 / PCC 6301 / SAUG 1402/1) (Anacystis nidulans)).